Reading from the N-terminus, the 233-residue chain is Triosephosphate isomerase (233 aa).

Residue 8–10 (NWK) coordinates substrate. His-91 acts as the Electrophile in catalysis. Catalysis depends on Glu-155, which acts as the Proton acceptor. Substrate contacts are provided by Gly-161 and Ser-192.

Belongs to the triosephosphate isomerase family. In terms of assembly, homodimer.

It localises to the cytoplasm. It carries out the reaction D-glyceraldehyde 3-phosphate = dihydroxyacetone phosphate. It functions in the pathway carbohydrate biosynthesis; gluconeogenesis. It participates in carbohydrate degradation; glycolysis; D-glyceraldehyde 3-phosphate from glycerone phosphate: step 1/1. Involved in the gluconeogenesis. Catalyzes stereospecifically the conversion of dihydroxyacetone phosphate (DHAP) to D-glyceraldehyde-3-phosphate (G3P). The chain is Triosephosphate isomerase from Wolbachia sp. subsp. Brugia malayi (strain TRS).